The following is a 422-amino-acid chain: Chorismate synthase (422 aa).

Positions 43 and 49 each coordinate NADP(+). Residues 143 to 145, 264 to 265, Gly-309, 324 to 328, and Arg-350 contribute to the FMN site; these read RSS, QA, and KPIST.

It belongs to the chorismate synthase family. Homotetramer. The cofactor is FMNH2.

The catalysed reaction is 5-O-(1-carboxyvinyl)-3-phosphoshikimate = chorismate + phosphate. It functions in the pathway metabolic intermediate biosynthesis; chorismate biosynthesis; chorismate from D-erythrose 4-phosphate and phosphoenolpyruvate: step 7/7. In terms of biological role, catalyzes the anti-1,4-elimination of the C-3 phosphate and the C-6 proR hydrogen from 5-enolpyruvylshikimate-3-phosphate (EPSP) to yield chorismate, which is the branch point compound that serves as the starting substrate for the three terminal pathways of aromatic amino acid biosynthesis. This reaction introduces a second double bond into the aromatic ring system. This is Chorismate synthase from Corynebacterium jeikeium (strain K411).